A 162-amino-acid chain; its full sequence is Zinc finger protein ZAT12 (162 aa).

2 consecutive C2H2-type zinc fingers follow at residues 39-61 (FTCKTCLKQFHSFQALGGHRASH) and 82-104 (HPCPICGVEFPMGQALGGHMRRH).

In terms of tissue distribution, expressed in roots, stems and flowers.

The protein localises to the nucleus. In terms of biological role, transcriptional repressor involved in light acclimation, cold and oxidative stress responses. May regulate a collection of transcripts involved in response to high-light, cold and oxidative stress. The chain is Zinc finger protein ZAT12 (ZAT12) from Arabidopsis thaliana (Mouse-ear cress).